Here is a 630-residue protein sequence, read N- to C-terminus: A-type voltage-gated potassium channel KCND2 (630 aa).

Topologically, residues 1–184 (MAAGVAAWLP…FENPHTSTMA (184 aa)) are cytoplasmic. Residues 2–20 (AAGVAAWLPFARAAAIGWM) form an interaction with KCNIP1, KCNIP2, and other family members region. Thr-38 bears the Phosphothreonine mark. Positions 71 to 90 (ERDFFYHPETQQYFFDRDPD) are interaction with KCNIP1. His-105, Cys-111, Cys-132, and Cys-133 together coordinate Zn(2+). A helical membrane pass occupies residues 185 to 206 (LVFYYVTGFFIAVSVIANVVET). Over 207-226 (VPCGSSPGHIKELPCGERYA) the chain is Extracellular. Residues 227–249 (VAFFCLDTACVMIFTVEYLLRLA) traverse the membrane as a helical segment. The Cytoplasmic portion of the chain corresponds to 250–256 (AAPSRYR). A helical transmembrane segment spans residues 257 to 281 (FVRSVMSIIDVVAILPYYIGLVMTD). The Extracellular portion of the chain corresponds to 282–287 (NEDVSG). A helical; Voltage-sensor transmembrane segment spans residues 288 to 307 (AFVTLRVFRVFRIFKFSRHS). Topologically, residues 308 to 321 (QGLRILGYTLKSCA) are cytoplasmic. Residues 308-321 (QGLRILGYTLKSCA) are S4-S5 linker. A helical transmembrane segment spans residues 322 to 345 (SELGFLLFSLTMAIIIFATVMFYA). Topologically, residues 346–357 (EKGSSASKFTSI) are extracellular. The segment at residues 358–369 (PAAFWYTIVTMT) is an intramembrane region (helical). The K(+) site is built by Thr-370, Leu-371, Gly-372, and Tyr-373. A Selectivity filter motif is present at residues 370 to 375 (TLGYGD). An intramembrane segment occupies 370–377 (TLGYGDMV). Residues 378-380 (PKT) lie on the Extracellular side of the membrane. Residues 381–403 (IAGKIFGSICSLSGVLVIALPVP) traverse the membrane as a helical segment. Residues 404–630 (VIVSNFSRIY…GGNIVRVSAL (227 aa)) are Cytoplasmic-facing. The segment at 474–489 (FETQHHHLLHCLEKTT) is required for dendritic targeting. The important for normal channel activation and inactivation, for interaction with KCNIP2, and probably other family members as well stretch occupies residues 474–630 (FETQHHHLLH…GGNIVRVSAL (157 aa)). Phosphoserine is present on residues Ser-548, Ser-552, Ser-572, and Ser-575. The disordered stretch occupies residues 600-622 (IPTPPVTTPEGDDRPESPEYSGG). Phosphothreonine is present on residues Thr-602 and Thr-607. Residue Ser-616 is modified to Phosphoserine. A PDZ-binding motif is present at residues 627–630 (VSAL).

Belongs to the potassium channel family. D (Shal) (TC 1.A.1.2) subfamily. Kv4.2/KCND2 sub-subfamily. Homotetramer or heterotetramer with KCND1 or KCND3. Associates with the regulatory subunits KCNIP2, KCNIP3 and KCNIP4. Interacts with the regulatory subunit KCNIP1; this interaction mediates the capture of both the N- and C-terminus of KCND2, preventing N-type inactivation and stabilizing the S6 conformation, thereby accelerating closed state inactivation and recovery. In vivo, probably exists as heteromeric complex containing variable proportions of KCND1, KCND2, KCND3, KCNIP1, KCNIP2, KCNIP3, KCNIP4, DPP6 and DPP10. The tetrameric channel can associate with up to four regulatory subunits, such as KCNIP2 or KCNIP4. Interaction with four KCNIP4 chains does not reduce interaction with DPP10. Interacts with DLG4 and NCS1/FREQ. Interacts with DLG1. Probably part of a complex consisting of KCNIP1, KCNIP2 isoform 3 and KCND2. Interacts with FLNA, FLNC and DPP10. Identified in a complex with cAMP-dependent protein kinase (PKA), CAV3, AKAP6 and KCND3 in cardiac myocytes. Interacts (via S1 and S2 helices) with DPP6; this interaction stabilizes the conformation of the S1-S2 helices and facilitates S4 conformational change, including S4 sliding up and down, thereby accelerating activation, inactivation, and recovery. In terms of processing, phosphorylation in response to MAPK activation is increased in stimulated dendrites. Interaction with KCNIP2 and DPP6 propomtes phosphorylation by PKA at Ser-552. Phosphorylation at Ser-552 has no effect on interaction with KCNIP3, but is required for the regulation of channel activity by KCNIP3. Phosphorylation at Ser-552 leads to KCND2 internalization. Phosphorylated by MAPK in response to signaling via the metabotropic glutamate receptor GRM5. Phosphorylation at Ser-616 is required for the down-regulation of neuronal A-type currents in response to signaling via GRM5.

It localises to the cell membrane. Its subcellular location is the cell projection. The protein resides in the dendrite. It is found in the synapse. The protein localises to the perikaryon. It localises to the postsynaptic cell membrane. Its subcellular location is the dendritic spine. The protein resides in the sarcolemma. It is found in the cell junction. The protein localises to the membrane. It localises to the caveola. The enzyme catalyses K(+)(in) = K(+)(out). In terms of biological role, voltage-gated potassium channel that mediates transmembrane potassium transport in excitable membranes, primarily in the brain, but also in rodent heart. Mediates the major part of the dendritic A-type current I(SA) in brain neurons. This current is activated at membrane potentials that are below the threshold for action potentials. It regulates neuronal excitability, prolongs the latency before the first spike in a series of action potentials, regulates the frequency of repetitive action potential firing, shortens the duration of action potentials and regulates the back-propagation of action potentials from the neuronal cell body to the dendrites. Contributes to the regulation of the circadian rhythm of action potential firing in suprachiasmatic nucleus neurons, which regulates the circadian rhythm of locomotor activity. Functions downstream of the metabotropic glutamate receptor GRM5 and plays a role in neuronal excitability and in nociception mediated by activation of GRM5. Mediates the transient outward current I(to) in rodent heart left ventricle apex cells, but not in human heart, where this current is mediated by another family member. Forms tetrameric potassium-selective channels through which potassium ions pass in accordance with their electrochemical gradient. The channel alternates between opened and closed conformations in response to the voltage difference across the membrane. Can form functional homotetrameric channels and heterotetrameric channels that contain variable proportions of KCND2 and KCND3; channel properties depend on the type of pore-forming alpha subunits that are part of the channel. In vivo, membranes probably contain a mixture of heteromeric potassium channel complexes. Interaction with specific isoforms of the regulatory subunits KCNIP1, KCNIP2, KCNIP3 or KCNIP4 strongly increases expression at the cell surface and thereby increases channel activity; it modulates the kinetics of channel activation and inactivation, shifts the threshold for channel activation to more negative voltage values, shifts the threshold for inactivation to less negative voltages and accelerates recovery after inactivation. Likewise, interaction with DPP6 or DPP10 promotes expression at the cell membrane and regulates both channel characteristics and activity. Upon depolarization, the channel goes from a resting closed state (C state) to an activated but non-conducting state (C* state), from there, the channel may either inactivate (I state) or open (O state). The protein is A-type voltage-gated potassium channel KCND2 of Mustela putorius furo (European domestic ferret).